The following is a 198-amino-acid chain: Pyridoxal 5'-phosphate synthase subunit PdxT (198 aa).

Position 49 to 51 (49 to 51 (GES)) interacts with L-glutamine. The Nucleophile role is filled by Cys-81. L-glutamine contacts are provided by residues Arg-113 and 141 to 142 (IR). Catalysis depends on charge relay system residues His-177 and Glu-179.

The protein belongs to the glutaminase PdxT/SNO family. In the presence of PdxS, forms a dodecamer of heterodimers. Only shows activity in the heterodimer.

It catalyses the reaction aldehydo-D-ribose 5-phosphate + D-glyceraldehyde 3-phosphate + L-glutamine = pyridoxal 5'-phosphate + L-glutamate + phosphate + 3 H2O + H(+). The catalysed reaction is L-glutamine + H2O = L-glutamate + NH4(+). Its pathway is cofactor biosynthesis; pyridoxal 5'-phosphate biosynthesis. In terms of biological role, catalyzes the hydrolysis of glutamine to glutamate and ammonia as part of the biosynthesis of pyridoxal 5'-phosphate. The resulting ammonia molecule is channeled to the active site of PdxS. This chain is Pyridoxal 5'-phosphate synthase subunit PdxT, found in Mycobacterium avium (strain 104).